A 363-amino-acid polypeptide reads, in one-letter code: DNA replication and repair protein RecF (363 aa).

33–40 is a binding site for ATP; it reads GDNGQGKT.

The protein belongs to the RecF family.

The protein resides in the cytoplasm. The RecF protein is involved in DNA metabolism; it is required for DNA replication and normal SOS inducibility. RecF binds preferentially to single-stranded, linear DNA. It also seems to bind ATP. The sequence is that of DNA replication and repair protein RecF from Tropheryma whipplei (strain TW08/27) (Whipple's bacillus).